Consider the following 261-residue polypeptide: Vacuolar iron transporter (261 aa).

A helical membrane pass occupies residues 66–86; the sequence is GQVLIAALAALFAGALSMAVG. The Fe cation site is built by glutamate 105, glutamate 108, glutamate 116, glutamate 119, and glutamate 154. A run of 3 helical transmembrane segments spans residues 170–190, 197–217, and 233–253; these read MVSF…GAWI, IGAI…VGAF, and GGAL…TLNI.

Belongs to the CCC1 family.

It localises to the vacuole membrane. It carries out the reaction Fe(2+)(in) = Fe(2+)(out). In terms of biological role, vacuolar iron transporter involved in the transfer of iron ions from the cytosol to the vacuole for intracellular iron storage. This is Vacuolar iron transporter from Acanthamoeba castellanii (strain ATCC 30010 / Neff).